Here is a 146-residue protein sequence, read N- to C-terminus: Acidic phospholipase A2 2 (146 aa).

Positions 1–21 (MNPAHLLILAAVCVSSLGASS) are cleaved as a signal peptide. Positions 22-27 (NRPMPL) are excised as a propeptide. 7 disulfides stabilise this stretch: Cys38/Cys98, Cys53/Cys145, Cys55/Cys71, Cys70/Cys126, Cys77/Cys119, Cys87/Cys112, and Cys105/Cys117. Ca(2+)-binding residues include Tyr54, Gly56, and Gly58. The active site involves His74. A Ca(2+)-binding site is contributed by Asp75. Asp120 is a catalytic residue.

This sequence belongs to the phospholipase A2 family. Group I subfamily. D49 sub-subfamily. Requires Ca(2+) as cofactor. As to expression, expressed by the venom gland.

The protein localises to the secreted. The catalysed reaction is a 1,2-diacyl-sn-glycero-3-phosphocholine + H2O = a 1-acyl-sn-glycero-3-phosphocholine + a fatty acid + H(+). PLA2 catalyzes the calcium-dependent hydrolysis of the 2-acyl groups in 3-sn-phosphoglycerides. The sequence is that of Acidic phospholipase A2 2 from Naja kaouthia (Monocled cobra).